The following is a 740-amino-acid chain: MLKLFSAFRKNKIWDFNGGIHPPEMKTQSNGTPLRQVPLAQRFVIPLKQHIGAEGELCVSVGDKVLRGQPLTRGRGKMLPVHAPTSGTVTAIAPHSTAHPSALAELSVIIDADGEDCWIPRDGWADYRSRRREELIERIHQFGVAGLGGAGFPTGVKLQGGGDKIETLIINAAECEPYITADDRLMQDCAAQVVEGIRILAHILQPREILIGIEDNKPQAISMLRAVLADSHDISLRVIPTKYPSGGAKQLTYILTGKQVPHGGRSSDIGVLMQNVGTAYAVKRAVIDGEPITERVVTLTGEAIARPGNVWARLGTPVRHLLNDAGFCPSADQMVIMGGPLMGFTLPWLDVPVVKITNCLLAPSANELGEPQEEQSCIRCSACADACPADLLPQQLYWFSKGQQHDKATTHNIADCIECGACAWVCPSNIPLVQYFRQEKAEIAAIRQEEKRAAEAKARFEARQARLEREKAARLERHKSAAVQPAAKDKDAIAAALARVKEKQAQATQPIVIKAGERPDNSAIIAAREARKAQARAKQAELQQTNDAATVADPRKTAVEAAIARAKARKLEQQQANAEPEEQVDPRKAAVEAAIARAKARKLEQQQANAEPEEQVDPRKAAVEAAIARAKARKLEQQQSNAEPEEQVDPRKAAVEAAIARAKARKLEQQQANAEPEEQVDPRKAAVEAAIARAKARKLEQQQTNAEPEEQVDPRKAAVAAAIARAQAKKAAQQKVVNED.

2 4Fe-4S ferredoxin-type domains span residues 369–397 (GEPQ…QQLY) and 407–436 (KATT…VQYF). Residues Cys-377, Cys-380, Cys-383, Cys-387, Cys-416, Cys-419, Cys-422, and Cys-426 each contribute to the [4Fe-4S] cluster site. A disordered region spans residues 602 to 716 (KLEQQQANAE…EPEEQVDPRK (115 aa)).

It belongs to the 4Fe4S bacterial-type ferredoxin family. RnfC subfamily. The complex is composed of six subunits: RsxA, RsxB, RsxC, RsxD, RsxE and RsxG. Requires [4Fe-4S] cluster as cofactor.

The protein localises to the cell inner membrane. Functionally, part of a membrane-bound complex that couples electron transfer with translocation of ions across the membrane. Required to maintain the reduced state of SoxR. This is Ion-translocating oxidoreductase complex subunit C from Escherichia coli (strain SE11).